The sequence spans 347 residues: uncharacterized protein (347 aa).

Residues 1-26 (MQGRVAGSCAPLGLLLVCLHLPGLFA) form the signal peptide. Residues 41–60 (GTNLPQLGQPSSTGPSNSEH) are compositionally biased toward polar residues. Disordered regions lie at residues 41–110 (GTNL…MDSW) and 148–189 (SGPL…AGGK). A compositionally biased stretch (low complexity) spans 148–157 (SGPLPGESSP).

As to quaternary structure, binds to numerous extracellular matrix proteins.

It is found in the secreted. Its subcellular location is the extracellular space. The protein resides in the extracellular matrix. This is an uncharacterized protein from Pan troglodytes (Chimpanzee).